We begin with the raw amino-acid sequence, 148 residues long: 3-dehydroquinate dehydratase (148 aa).

Tyr-24 functions as the Proton acceptor in the catalytic mechanism. Residues Asn-75, His-81, and Asp-88 each contribute to the substrate site. His-101 serves as the catalytic Proton donor. Residues 102–103 and Arg-112 contribute to the substrate site; that span reads LS.

This sequence belongs to the type-II 3-dehydroquinase family. As to quaternary structure, homododecamer.

It carries out the reaction 3-dehydroquinate = 3-dehydroshikimate + H2O. Its pathway is metabolic intermediate biosynthesis; chorismate biosynthesis; chorismate from D-erythrose 4-phosphate and phosphoenolpyruvate: step 3/7. In terms of biological role, catalyzes a trans-dehydration via an enolate intermediate. The protein is 3-dehydroquinate dehydratase of Sinorhizobium medicae (strain WSM419) (Ensifer medicae).